Reading from the N-terminus, the 1127-residue chain is Inactive phospholipase C-like protein 2 (1127 aa).

The span at M1–G11 shows a compositional bias: gly residues. The interval M1–P128 is disordered. A2 is subject to N-acetylalanine. Position 17 is a phosphoserine (S17). A compositionally biased stretch (low complexity) spans G19–G31. The span at V32 to L42 shows a compositional bias: gly residues. Position 84 is a phosphothreonine (T84). In terms of domain architecture, PH spans N141 to S251. Residues Q426–K570 enclose the PI-PLC X-box domain. Residue T584 is modified to Phosphothreonine. Residues L618–R734 enclose the PI-PLC Y-box domain. A C2 domain is found at R734–S863. Residues G1101–E1127 are disordered. Over residues D1106–E1127 the composition is skewed to basic and acidic residues. A Phosphoserine modification is found at S1113.

It localises to the cytoplasm. Functionally, may play an role in the regulation of Ins(1,4,5)P3 around the endoplasmic reticulum. The protein is Inactive phospholipase C-like protein 2 (PLCL2) of Homo sapiens (Human).